Reading from the N-terminus, the 416-residue chain is Phosphoglycerate kinase (416 aa).

Substrate is bound by residues 24-26 (DLN), Arg40, 63-66 (HLGR), Arg122, and Arg162. ATP contacts are provided by residues Lys212, Gly300, Glu331, and 360-363 (GGDS).

The protein belongs to the phosphoglycerate kinase family. Monomer.

Its subcellular location is the cytoplasm. It carries out the reaction (2R)-3-phosphoglycerate + ATP = (2R)-3-phospho-glyceroyl phosphate + ADP. It functions in the pathway carbohydrate degradation; glycolysis; pyruvate from D-glyceraldehyde 3-phosphate: step 2/5. The polypeptide is Phosphoglycerate kinase (Mycobacterium ulcerans (strain Agy99)).